The chain runs to 245 residues: Probable phosphatase Spro_1934 (245 aa).

Residues His-7, His-9, His-15, His-40, Glu-73, His-101, His-131, Asp-192, and His-194 each coordinate Zn(2+).

The protein belongs to the PHP family. Homotrimer. Requires Zn(2+) as cofactor.

The chain is Probable phosphatase Spro_1934 from Serratia proteamaculans (strain 568).